A 99-amino-acid polypeptide reads, in one-letter code: Class II hydrophobin 3 (99 aa).

The signal sequence occupies residues 1–18; sequence MRIDILATAALLAQLASA. Disulfide bonds link C31–C79, C40–C70, and C41–C53.

It belongs to the cerato-ulmin hydrophobin family. In terms of assembly, homodimer. Homodimers further self-assemble to form highly ordered films at water-air interfaces through intermolecular interactions.

It localises to the secreted. The protein resides in the cell wall. Functionally, aerial growth, conidiation, and dispersal of filamentous fungi in the environment rely upon a capability of their secreting small amphipathic proteins called hydrophobins (HPBs) with low sequence identity. Class I can self-assemble into an outermost layer of rodlet bundles on aerial cell surfaces, conferring cellular hydrophobicity that supports fungal growth, development and dispersal; whereas Class II form highly ordered films at water-air interfaces through intermolecular interactions but contribute nothing to the rodlet structure. Hyd3 is a class II hydrophobin required for barley root colonization. Hyd1 and Hyd3 are jointly required for conidial hydrophobicity and dispersal, but seem not to be involved in mycelia hydrophobicity. Inhibits conidial germination in environments not suitable for mycelial growth. Plays probably a role in intraspecific signaling or hyphal fusion. The polypeptide is Class II hydrophobin 3 (Bionectria ochroleuca (Gliocladium roseum)).